A 275-amino-acid polypeptide reads, in one-letter code: Elongation factor Ts (275 aa).

Residues 80-83 (TDFV) form an involved in Mg(2+) ion dislocation from EF-Tu region.

Belongs to the EF-Ts family.

The protein resides in the cytoplasm. Associates with the EF-Tu.GDP complex and induces the exchange of GDP to GTP. It remains bound to the aminoacyl-tRNA.EF-Tu.GTP complex up to the GTP hydrolysis stage on the ribosome. This chain is Elongation factor Ts, found in Clavibacter michiganensis subsp. michiganensis (strain NCPPB 382).